Consider the following 348-residue polypeptide: Protein lifeguard 1 (348 aa).

The segment at 1–118 is disordered; that stretch reads MSHEKSFLVS…GNYQEEGPPS (118 aa). Positions 14–41 are enriched in pro residues; sequence YPPPNPGYPVGPQAPMPPYVQPPYPGAP. Residues 42-57 show a composition bias toward low complexity; it reads YPQAAFQPSPYGQPGY. Positions 82 to 101 are enriched in pro residues; it reads GPYPQSPFPPNPYGQPPPFQ. Transmembrane regions (helical) follow at residues 142–162, 174–194, 205–225, 230–250, 260–280, 284–304, and 323–343; these read VFLVLTLQLSVTLSTVAIFTF, VWTYYVSYAIFFISLIVLSCC, LVALSILTISLSYMVGMIASF, AVIMAVGITTAVCFTVVIFSM, MGVLLVSVVVLFIFAILCIFI, ILEIVYASLGALLFTCFLAVD, and FAALNLYTDIINIFLYILTII.

This sequence belongs to the BI1 family. LFG subfamily.

The protein localises to the membrane. Potential apoptotic regulator. In Rattus norvegicus (Rat), this protein is Protein lifeguard 1 (Grina).